The following is a 490-amino-acid chain: Dual specificity protein kinase CLK3 (490 aa).

Y7 is modified (phosphotyrosine). 6 positions are modified to phosphoserine: S9, S49, S51, S67, S76, and S78. The disordered stretch occupies residues 22–138 (RRRSYSREHE…SKRSSRSVED (117 aa)). 2 stretches are compositionally biased toward basic and acidic residues: residues 26–56 (YSRE…DRLP) and 63–76 (EHRD…EDRS). Residues 103–116 (TRKHAHHCHKRRTR) are compositionally biased toward basic residues. Over residues 117-130 (SCSSASSRSQQSSK) the composition is skewed to low complexity. A Phosphoserine modification is found at S135. In terms of domain architecture, Protein kinase spans 156–472 (YEIVGNLGEG…LAEALLHPFF (317 aa)). Residues 162–170 (LGEGTFGKV) and K186 contribute to the ATP site. D283 functions as the Proton acceptor in the catalytic mechanism.

Belongs to the protein kinase superfamily. CMGC Ser/Thr protein kinase family. Lammer subfamily. Post-translationally, autophosphorylates on all three types of residues.

The protein localises to the nucleus. It localises to the cytoplasm. It is found in the cytoplasmic vesicle. Its subcellular location is the secretory vesicle. The protein resides in the acrosome. It carries out the reaction L-seryl-[protein] + ATP = O-phospho-L-seryl-[protein] + ADP + H(+). It catalyses the reaction L-threonyl-[protein] + ATP = O-phospho-L-threonyl-[protein] + ADP + H(+). The catalysed reaction is L-tyrosyl-[protein] + ATP = O-phospho-L-tyrosyl-[protein] + ADP + H(+). Its activity is regulated as follows. Leucettine L41 inhibits its kinase activity and affects the regulation of alternative splicing mediated by phosphorylation of SR proteins. Functionally, dual specificity kinase acting on both serine/threonine and tyrosine-containing substrates. Phosphorylates serine- and arginine-rich (SR) proteins of the spliceosomal complex. May be a constituent of a network of regulatory mechanisms that enable SR proteins to control RNA splicing and can cause redistribution of SR proteins from speckles to a diffuse nucleoplasmic distribution. Phosphorylates SRSF1 and SRSF3. Regulates the alternative splicing of tissue factor (F3) pre-mRNA in endothelial cells. This is Dual specificity protein kinase CLK3 (CLK3) from Bos taurus (Bovine).